We begin with the raw amino-acid sequence, 196 residues long: Putative adenylate kinase (196 aa).

Positions 10, 12, 13, 14, and 15 each coordinate ATP. The segment at 30–53 (YLNDLIKEEHLYSEVDEERDSVIA) is NMP. The interval 118–128 (KRGYSEEKINE) is LID. Arginine 119 is a binding site for ATP.

It belongs to the adenylate kinase family. AK6 subfamily. Interacts with uS11. Not a structural component of 40S pre-ribosomes, but transiently interacts with them by binding to uS11.

The catalysed reaction is AMP + ATP = 2 ADP. It carries out the reaction ATP + H2O = ADP + phosphate + H(+). Functionally, broad-specificity nucleoside monophosphate (NMP) kinase that catalyzes the reversible transfer of the terminal phosphate group between nucleoside triphosphates and monophosphates. Also has ATPase activity. Involved in the late maturation steps of the 30S ribosomal particles, specifically 16S rRNA maturation. While NMP activity is not required for ribosome maturation, ATPase activity is. Associates transiently with small ribosomal subunit protein uS11. ATP hydrolysis breaks the interaction with uS11. May temporarily remove uS11 from the ribosome to enable a conformational change of the ribosomal RNA that is needed for the final maturation step of the small ribosomal subunit. In Methanosarcina mazei (strain ATCC BAA-159 / DSM 3647 / Goe1 / Go1 / JCM 11833 / OCM 88) (Methanosarcina frisia), this protein is Putative adenylate kinase.